Reading from the N-terminus, the 164-residue chain is V-type proton ATPase subunit c3 (164 aa).

Residues 1–11 lie on the Lumenal side of the membrane; it reads MSTFSGDETAP. A helical transmembrane segment spans residues 12–32; that stretch reads FFGFLGAAAALVFSCMGAAYG. Residues 33 to 54 are Cytoplasmic-facing; sequence TAKSGVGVASMGVMRPELVMKS. Residues 55-75 form a helical membrane-spanning segment; sequence IVPVVMAGVLGIYGLIIAVII. Residues 76–94 lie on the Lumenal side of the membrane; it reads STGINPKAKSYYLFDGYAH. A helical transmembrane segment spans residues 95–116; that stretch reads LSSGLACGLAGLSAGMAIGIVG. The Cytoplasmic segment spans residues 117 to 128; the sequence is DAGVRANAQQPK. A helical membrane pass occupies residues 129-154; it reads LFVGMILILIFAEALALYGLIVGIIL. Residues 155 to 164 lie on the Lumenal side of the membrane; that stretch reads SSRAGQSRAE.

Belongs to the V-ATPase proteolipid subunit family. In terms of assembly, V-ATPase is a heteromultimeric enzyme composed of a peripheral catalytic V1 complex (components A to H) attached to an integral membrane V0 proton pore complex (components: a, c, c'', d and e). The proteolipid components c and c'' are present as a hexameric ring that forms the proton-conducting pore. In terms of tissue distribution, expressed in leaf, root, flower and silique.

It localises to the vacuole membrane. Functionally, proton-conducting pore forming subunit of the membrane integral V0 complex of vacuolar ATPase. V-ATPase is responsible for acidifying a variety of intracellular compartments in eukaryotic cells. This is V-type proton ATPase subunit c3 (VHA-c3) from Arabidopsis thaliana (Mouse-ear cress).